Here is a 351-residue protein sequence, read N- to C-terminus: Outer membrane porin PhoE (351 aa).

Residues 1–21 (MKKSTLALVVMGIVASASVQA) form the signal peptide.

This sequence belongs to the Gram-negative porin family. In terms of assembly, homotrimer. Forms mixed heterotrimers with OmpC and with OmpF; other mixed heterotrimers are also probable.

It is found in the cell outer membrane. Uptake of inorganic phosphate, phosphorylated compounds, and some other negatively charged solutes. The sequence is that of Outer membrane porin PhoE (phoE) from Escherichia coli (strain K12).